We begin with the raw amino-acid sequence, 160 residues long: SPbeta prophage-derived uncharacterized protein YokE (160 aa).

The protein is SPbeta prophage-derived uncharacterized protein YokE (yokE) of Bacillus subtilis (strain 168).